Reading from the N-terminus, the 240-residue chain is Zein-alpha A20 (240 aa).

An N-terminal signal peptide occupies residues 1-21; the sequence is MATKIFSLLMLLALSACVANA.

This sequence belongs to the zein family.

Zeins are major seed storage proteins. The polypeptide is Zein-alpha A20 (Zea mays (Maize)).